Here is a 180-residue protein sequence, read N- to C-terminus: ATP-dependent protease subunit HslV (180 aa).

The active site involves Thr5. 3 residues coordinate Na(+): Gly165, Cys168, and Thr171.

This sequence belongs to the peptidase T1B family. HslV subfamily. A double ring-shaped homohexamer of HslV is capped on each side by a ring-shaped HslU homohexamer. The assembly of the HslU/HslV complex is dependent on binding of ATP.

It localises to the cytoplasm. It catalyses the reaction ATP-dependent cleavage of peptide bonds with broad specificity.. With respect to regulation, allosterically activated by HslU binding. Functionally, protease subunit of a proteasome-like degradation complex believed to be a general protein degrading machinery. This chain is ATP-dependent protease subunit HslV, found in Helicobacter hepaticus (strain ATCC 51449 / 3B1).